The sequence spans 509 residues: Src substrate cortactin (509 aa).

The disordered stretch occupies residues Met-1–Phe-28. Positions Gly-17–Phe-28 are enriched in acidic residues. Cortactin repeat units lie at residues Ala-80–Asp-116, Ser-117–Asp-153, Tyr-154–Asp-190, Tyr-191–Asp-227, and Tyr-228–Asp-264. Residues Lys-87 and Lys-107 each carry the N6-acetyllysine modification. Phosphoserine is present on Ser-113. Arg-119 is modified (omega-N-methylarginine). Lys-124 is subject to N6-acetyllysine. Residue Lys-144 is modified to N6-acetyllysine; alternate. Lys-144 participates in a covalent cross-link: Glycyl lysine isopeptide (Lys-Gly) (interchain with G-Cter in SUMO1); alternate. Lys-144 participates in a covalent cross-link: Glycyl lysine isopeptide (Lys-Gly) (interchain with G-Cter in SUMO2); alternate. Position 150 is a phosphoserine (Ser-150). Residues Lys-152, Lys-161, and Lys-171 each carry the N6-acetyllysine modification. At Lys-181 the chain carries N6-acetyllysine; alternate. Lys-181 is covalently cross-linked (Glycyl lysine isopeptide (Lys-Gly) (interchain with G-Cter in SUMO1); alternate). Lys-181 participates in a covalent cross-link: Glycyl lysine isopeptide (Lys-Gly) (interchain with G-Cter in SUMO2); alternate. Residues Lys-193 and Lys-198 each carry the N6-acetyllysine modification. Lys-218 participates in a covalent cross-link: Glycyl lysine isopeptide (Lys-Gly) (interchain with G-Cter in SUMO1). N6-acetyllysine is present on Lys-235. A Phosphoserine modification is found at Ser-261. Residues Tyr-265 to Phe-287 form a Cortactin 6; truncated repeat. N6-acetyllysine occurs at positions 267, 272, 277, and 309. A coiled-coil region spans residues Ser-311 to Thr-364. A disordered region spans residues Glu-318 to Ala-409. Over residues Leu-320 to Arg-359 the composition is skewed to basic and acidic residues. At Thr-364 the chain carries Phosphothreonine. Phosphoserine is present on residues Ser-368, Ser-370, Ser-380, and Ser-381. Residue Tyr-384 is modified to Phosphotyrosine; by FAK1. The span at Glu-393–Ser-406 shows a compositional bias: low complexity. Tyr-405 bears the Phosphotyrosine mark. Residue Ser-406 is modified to Phosphoserine. A phosphotyrosine; by FAK1 mark is found at Tyr-429 and Tyr-445. Tyr-445 and Tyr-448 each carry phosphotyrosine; by SRC. In terms of domain architecture, SH3 spans Asp-451–Gln-509.

In terms of assembly, part of a complex composed of NEDD9, AURKA and CTTN; within the complex NEDD9 acts as a scaffold protein and is required for complex formation. Interacts (via N-terminus) with NEDD9. Identified in a complex containing FGFR4, NCAM1, CDH2, PLCG1, FRS2, SRC, SHC1, GAP43 and CTTN. Forms a complex with ABL1 and MYLK. Interacts with SHANK2 and SHANK3 (via its SH3 domain). Interacts with PLXDC2 and SRCIN1. Interacts with SAMSN1 (via SH3 domain). Interacts (via SH3 domain) with ASAP1 (via Pro-rich region). Interacts with FER. Interacts with FGD1. Interacts with ABL2. Interacts with CTTNBP2NL; this interaction may target CTTN to stress fibers. Interacts with CTTNBP2; this interaction may target CTTN at the cell cortex or dendritic spines. Interacts (via SH3 domain) with DNM2. Interacts with ACTN1. Interacts with KCNA2 (via non-phosphorylated C-terminus). Interacts with PTK2/FAK1. Interacts with KCNH1. Interacts (via SH3 domain) with DIP2A (via N-terminus); the interaction enhances CTTN acetylation and is required for proper synaptic transmission. Interacts with XIRP1 (via N-terminus); the interaction promotes CTTN localization to intercalated disks in cardiomyocytes. In terms of processing, acetylated. Post-translationally, phosphorylated by FER. Phosphorylated in response to FGR activation. Phosphorylation by SRC promotes MYLK binding. Tyrosine phosphorylation in transformed cells may contribute to cellular growth regulation and transformation. Phosphorylated by PKN2 at both serine and threonine residues in a GTP-bound Rac1-dependent manner in hyaluronan-induced astrocytes and hence down-regulated CTTN ability to associate with filamentous actin. Phosphorylated on tyrosine residues in response to CHRM1 activation. Phosphorylated by PTK2/FAK1 in response to cell adhesion. In terms of tissue distribution, detected in liver (at protein level).

Its subcellular location is the cytoplasm. It is found in the cytoskeleton. The protein resides in the cell projection. It localises to the lamellipodium. The protein localises to the ruffle. Its subcellular location is the dendrite. It is found in the cell membrane. The protein resides in the podosome. It localises to the cell junction. The protein localises to the focal adhesion. Its subcellular location is the membrane. It is found in the clathrin-coated pit. The protein resides in the dendritic spine. It localises to the cell cortex. The protein localises to the endoplasmic reticulum. Contributes to the organization of the actin cytoskeleton and cell shape. Plays a role in the formation of lamellipodia and in cell migration. Plays a role in the regulation of neuron morphology, axon growth and formation of neuronal growth cones. Through its interaction with CTTNBP2, involved in the regulation of neuronal spine density. Plays a role in focal adhesion assembly and turnover. In complex with ABL1 and MYLK regulates cortical actin-based cytoskeletal rearrangement critical to sphingosine 1-phosphate (S1P)-mediated endothelial cell (EC) barrier enhancement. Plays a role in intracellular protein transport and endocytosis, and in modulating the levels of potassium channels present at the cell membrane. Plays a role in receptor-mediated endocytosis via clathrin-coated pits. Required for stabilization of KCNH1 channels at the cell membrane. In Rattus norvegicus (Rat), this protein is Src substrate cortactin.